Reading from the N-terminus, the 506-residue chain is RNA-splicing ligase RtcB homolog (506 aa).

Residues D120, C123, H228, H260, and H354 each contribute to the Mn(2+) site. N227 to E231 contacts GMP. GMP-binding positions include H354–N355, G403–M406, S410, H429–G432, and K505. The GMP-histidine intermediate role is filled by H429.

Belongs to the RtcB family. In terms of assembly, catalytic component of the tRNA-splicing ligase complex. The cofactor is Mn(2+).

It carries out the reaction a 3'-end 3'-phospho-ribonucleotide-RNA + a 5'-end dephospho-ribonucleoside-RNA + GTP = a ribonucleotidyl-ribonucleotide-RNA + GMP + diphosphate. The catalysed reaction is a 3'-end 2',3'-cyclophospho-ribonucleotide-RNA + a 5'-end dephospho-ribonucleoside-RNA + GTP + H2O = a ribonucleotidyl-ribonucleotide-RNA + GMP + diphosphate + H(+). Its function is as follows. Catalytic subunit of the tRNA-splicing ligase complex that acts by directly joining spliced tRNA halves to mature-sized tRNAs by incorporating the precursor-derived splice junction phosphate into the mature tRNA as a canonical 3',5'-phosphodiester. May act as an RNA ligase with broad substrate specificity, and may function toward other RNAs. The polypeptide is RNA-splicing ligase RtcB homolog (Drosophila melanogaster (Fruit fly)).